The sequence spans 176 residues: Adenine phosphoribosyltransferase (176 aa).

Belongs to the purine/pyrimidine phosphoribosyltransferase family. In terms of assembly, homodimer.

Its subcellular location is the cytoplasm. It carries out the reaction AMP + diphosphate = 5-phospho-alpha-D-ribose 1-diphosphate + adenine. Its pathway is purine metabolism; AMP biosynthesis via salvage pathway; AMP from adenine: step 1/1. Its function is as follows. Catalyzes a salvage reaction resulting in the formation of AMP, that is energically less costly than de novo synthesis. This chain is Adenine phosphoribosyltransferase, found in Borreliella afzelii (strain PKo) (Borrelia afzelii).